The chain runs to 697 residues: DNA ligase (697 aa).

Residues 34–38 (DKTYD), 83–84 (SL), and Glu114 contribute to the NAD(+) site. Lys116 serves as the catalytic N6-AMP-lysine intermediate. Positions 137, 171, 315, and 339 each coordinate NAD(+). The Zn(2+) site is built by Cys430, Cys433, Cys448, and Cys453. A BRCT domain is found at 616–697 (KKSSKLNNLN…FHNLLKEENA (82 aa)).

The protein belongs to the NAD-dependent DNA ligase family. LigA subfamily. It depends on Mg(2+) as a cofactor. Mn(2+) serves as cofactor.

The enzyme catalyses NAD(+) + (deoxyribonucleotide)n-3'-hydroxyl + 5'-phospho-(deoxyribonucleotide)m = (deoxyribonucleotide)n+m + AMP + beta-nicotinamide D-nucleotide.. Functionally, DNA ligase that catalyzes the formation of phosphodiester linkages between 5'-phosphoryl and 3'-hydroxyl groups in double-stranded DNA using NAD as a coenzyme and as the energy source for the reaction. It is essential for DNA replication and repair of damaged DNA. In Mycoplasmopsis synoviae (strain 53) (Mycoplasma synoviae), this protein is DNA ligase.